Here is a 95-residue protein sequence, read N- to C-terminus: Cell division topological specificity factor (95 aa).

This sequence belongs to the MinE family.

Its function is as follows. Prevents the cell division inhibition by proteins MinC and MinD at internal division sites while permitting inhibition at polar sites. This ensures cell division at the proper site by restricting the formation of a division septum at the midpoint of the long axis of the cell. This chain is Cell division topological specificity factor, found in Psychrobacter cryohalolentis (strain ATCC BAA-1226 / DSM 17306 / VKM B-2378 / K5).